A 780-amino-acid chain; its full sequence is APC membrane recruitment protein 3 (780 aa).

Basic and acidic residues predominate over residues 20 to 32 (KLIDSPAKEDPDK). Disordered stretches follow at residues 20-59 (KLIDSPAKEDPDKWPLSLGEQQRAYGEKSSQTSPCSQGYG), 341-407 (ELPL…FPRD), 547-569 (KGREDQATTCFPPSRQEPWAHSG), 582-617 (GEPARGSKTPSKDDSLEEGTQDFSEGQSSSEATMTS), 635-659 (KELGTPGNLRYSQGPLRPGHRGSAL), 706-729 (KNPISSKPNEAAGCGLSSSASPQD), and 749-780 (LGPQACSSVDSQPQQLCPRAPEQVPHRGSVGS). The segment covering 354–376 (SKASSIDTGTPKSEQPESVSTSD) has biased composition (polar residues). The segment covering 602 to 617 (QDFSEGQSSSEATMTS) has biased composition (polar residues). The segment covering 753–763 (ACSSVDSQPQQ) has biased composition (polar residues).

Belongs to the Amer family.

The protein localises to the cell membrane. Functionally, regulator of the canonical Wnt signaling pathway. Acts by specifically binding phosphatidylinositol 4,5-bisphosphate (PtdIns(4,5)P2), translocating to the cell membrane. This Mus musculus (Mouse) protein is APC membrane recruitment protein 3 (Amer3).